Here is a 394-residue protein sequence, read N- to C-terminus: Na(+)/H(+) antiporter NhaA (394 aa).

The next 11 helical transmembrane spans lie at 17 to 37 (ILLM…LAGV), 59 to 79 (LLLW…GLEV), 95 to 115 (SLPS…YLAF), 124 to 144 (VGWA…MALL), 154 to 174 (VFLL…IALF), 177 to 197 (TDLS…MVAL), 213 to 233 (FILW…GVII), 261 to 281 (FMIL…NMTL), 287 to 307 (PITL…VLLF), 328 to 348 (IIPV…IASL), and 363 to 383 (LGIL…LAKV).

This sequence belongs to the NhaA Na(+)/H(+) (TC 2.A.33) antiporter family.

It localises to the cell inner membrane. It catalyses the reaction Na(+)(in) + 2 H(+)(out) = Na(+)(out) + 2 H(+)(in). Its function is as follows. Na(+)/H(+) antiporter that extrudes sodium in exchange for external protons. The chain is Na(+)/H(+) antiporter NhaA from Shewanella frigidimarina (strain NCIMB 400).